The sequence spans 810 residues: Transducer protein CosT (810 aa).

Over 1–38 (MSEPTADAGDNSPSSTDTAPLDRVKAIALLPLRSYLVK) the chain is Cytoplasmic. The chain crosses the membrane as a helical span at residues 39–59 (FAVALLVILVIIAAGGFWVQA). Topologically, residues 60-323 (DATATLEANT…AFALSNQIRT (264 aa)) are extracellular. The chain crosses the membrane as a helical span at residues 324 to 344 (GILGFILVALVGVVLVGGTIG). In terms of domain architecture, HAMP 1 spans 345 to 397 (RNTAAAVQSLSAAAAEIEAGNYDVDVASSRRDEIGQLFASIGSMRDALVTQID). The Cytoplasmic segment spans residues 345–810 (RNTAAAVQSL…DRDVTPTQTD (466 aa)). The disordered stretch occupies residues 403-427 (REQATEAQQDAEAERERAEDARERA). Over residues 414-427 (EAERERAEDARERA) the composition is skewed to basic and acidic residues. The HAMP 2 domain maps to 439–493 (AELEAQAERYSDVMAACADGDLTRRMPADDTDNEAMAAIAASFNEMLAQWEHTII). The region spanning 512–748 (GAADAERASG…EAVSMTEEVA (237 aa)) is the Methyl-accepting transducer domain. Glu556 and Glu739 each carry glutamate methyl ester (Glu). Positions 751–784 (SDSTAGEAQSVSAAAEEQAASMSEISDSVESLSG) are disordered. The span at 755 to 774 (AGEAQSVSAAAEEQAASMSE) shows a compositional bias: low complexity. Residues 775–784 (ISDSVESLSG) are compositionally biased toward polar residues.

It belongs to the methyl-accepting chemotaxis (MCP) protein family. In terms of processing, methylated by CheR.

The protein resides in the cell membrane. Its function is as follows. Mediates chemotaxis towards compatible osmolytes. Probably transduces the signal from the substrate-binding protein CosB to the histidine kinase CheA. This Halobacterium salinarum (strain ATCC 700922 / JCM 11081 / NRC-1) (Halobacterium halobium) protein is Transducer protein CosT (cosT).